The sequence spans 369 residues: UDP-3-O-acylglucosamine N-acyltransferase (369 aa).

H252 acts as the Proton acceptor in catalysis. The disordered stretch occupies residues 348 to 369; the sequence is ERRQRGENNAPAQNKQDEEKSS.

It belongs to the transferase hexapeptide repeat family. LpxD subfamily. As to quaternary structure, homotrimer.

It carries out the reaction a UDP-3-O-[(3R)-3-hydroxyacyl]-alpha-D-glucosamine + a (3R)-hydroxyacyl-[ACP] = a UDP-2-N,3-O-bis[(3R)-3-hydroxyacyl]-alpha-D-glucosamine + holo-[ACP] + H(+). The protein operates within bacterial outer membrane biogenesis; LPS lipid A biosynthesis. Its function is as follows. Catalyzes the N-acylation of UDP-3-O-acylglucosamine using 3-hydroxyacyl-ACP as the acyl donor. Is involved in the biosynthesis of lipid A, a phosphorylated glycolipid that anchors the lipopolysaccharide to the outer membrane of the cell. The polypeptide is UDP-3-O-acylglucosamine N-acyltransferase (Cupriavidus metallidurans (strain ATCC 43123 / DSM 2839 / NBRC 102507 / CH34) (Ralstonia metallidurans)).